The following is a 168-amino-acid chain: Cell division inhibitor SulA (168 aa).

The interval 105 to 111 (ALETGNY) is ftsZ binding. The segment at 161–168 (RIHSGMVH) is lon protease binding.

This sequence belongs to the SulA family. In terms of assembly, interacts with FtsZ. In terms of processing, is rapidly cleaved and degraded by the Lon protease once DNA damage is repaired.

Functionally, component of the SOS system and an inhibitor of cell division. Accumulation of SulA causes rapid cessation of cell division and the appearance of long, non-septate filaments. In the presence of GTP, binds a polymerization-competent form of FtsZ in a 1:1 ratio, thus inhibiting FtsZ polymerization and therefore preventing it from participating in the assembly of the Z ring. This mechanism prevents the premature segregation of damaged DNA to daughter cells during cell division. The sequence is that of Cell division inhibitor SulA from Cronobacter sakazakii (strain ATCC BAA-894) (Enterobacter sakazakii).